A 349-amino-acid polypeptide reads, in one-letter code: Guanine nucleotide-binding protein alpha-13 subunit (349 aa).

The N-myristoyl glycine moiety is linked to residue G2. C3 carries S-palmitoyl cysteine lipidation. The G-alpha domain maps to 35-349; it reads SHIRLLLLGS…VFKDIMKRKR (315 aa). The segment at 38 to 51 is G1 motif; that stretch reads RLLLLGSAESGKTT. GTP is bound by residues 43–50, 177–183, 202–206, 271–274, and A327; these read GSAESGKT, IMAYVPT, DIGGQ, and NEID. Residues 175–183 form a G2 motif region; that stretch reads DLIMAYVPT. T183 lines the Mg(2+) pocket. The interval 198 to 207 is G3 motif; it reads FQLFDIGGQK. The segment at 267–274 is G4 motif; it reads YLFLNEID. Positions 325–330 are G5 motif; sequence CIAIDT.

This sequence belongs to the G-alpha family. In terms of assembly, g proteins are composed of 3 units; alpha, beta and gamma. The alpha chain contains the guanine nucleotide binding site.

In terms of biological role, guanine nucleotide-binding proteins (G proteins) are involved as modulators or transducers in various transmembrane signaling systems. The polypeptide is Guanine nucleotide-binding protein alpha-13 subunit (Caenorhabditis briggsae).